The following is a 358-amino-acid chain: Feruloyl CoA ortho-hydroxylase F6H1-3 (358 aa).

The Fe2OG dioxygenase domain maps to 200 to 308 (TKESLLMGSK…RISVPIFVNP (109 aa)). Residue tyrosine 216 participates in 2-oxoglutarate binding. Residues histidine 231, aspartate 233, and histidine 289 each coordinate Fe cation. The 2-oxoglutarate site is built by arginine 299 and serine 301.

It belongs to the iron/ascorbate-dependent oxidoreductase family. L-ascorbate serves as cofactor. It depends on Fe(2+) as a cofactor. As to expression, mostly expressed in tubers, and, at low levels, in underground stems, stems, leaves and petioles.

The catalysed reaction is (E)-feruloyl-CoA + 2-oxoglutarate + O2 = (E)-6-hydroxyferuloyl-CoA + succinate + CO2. It functions in the pathway phenylpropanoid metabolism. In terms of biological role, 2-oxoglutarate (OG)- and Fe(II)-dependent dioxygenase (2OGD) involved in scopoletin biosynthesis. Converts feruloyl CoA into 6'-hydroxyferuloyl CoA, and, at low efficiency, caffeoyl-CoA into 6'-hydroxycaffeate, but has no activity with p-coumaroyl-CoA. The chain is Feruloyl CoA ortho-hydroxylase F6H1-3 from Ipomoea batatas (Sweet potato).